Here is a 166-residue protein sequence, read N- to C-terminus: NADH-quinone oxidoreductase subunit C (166 aa).

This sequence belongs to the complex I 30 kDa subunit family. In terms of assembly, NDH-1 is composed of 14 different subunits. Subunits NuoB, C, D, E, F, and G constitute the peripheral sector of the complex.

The protein localises to the cell inner membrane. It carries out the reaction a quinone + NADH + 5 H(+)(in) = a quinol + NAD(+) + 4 H(+)(out). NDH-1 shuttles electrons from NADH, via FMN and iron-sulfur (Fe-S) centers, to quinones in the respiratory chain. The immediate electron acceptor for the enzyme in this species is believed to be a menaquinone. Couples the redox reaction to proton translocation (for every two electrons transferred, four hydrogen ions are translocated across the cytoplasmic membrane), and thus conserves the redox energy in a proton gradient. The chain is NADH-quinone oxidoreductase subunit C from Chlorobium phaeobacteroides (strain DSM 266 / SMG 266 / 2430).